A 608-amino-acid polypeptide reads, in one-letter code: Putative multicopper oxidase GMC1 (608 aa).

Plastocyanin-like domains are found at residues 51–163 (INGY…LIVE), 243–374 (LING…ELYR), and 421–548 (ERTF…FEVP). Positions 100, 102, 145, and 147 each coordinate Cu cation. The Cu cation site is built by H452, H455, H457, H530, C531, H532, and H536.

Belongs to the multicopper oxidase family. The cofactor is Cu cation.

Could be an iron transport multicopper oxidase, which is required for Fe(2+) high affinity uptake. May be required to oxidize Fe(2+) and release it from the transporter. Essential component of copper-dependent iron transport. Involved in meiotic prophase and synaptonemal complex (SC) assembly. The chain is Putative multicopper oxidase GMC1 (GMC1) from Saccharomyces cerevisiae (strain ATCC 204508 / S288c) (Baker's yeast).